A 350-amino-acid polypeptide reads, in one-letter code: Glycerol-1-phosphate dehydrogenase [NAD(P)+] (350 aa).

NAD(+)-binding positions include 97-101 and 119-122; these read GSKID and TTPS. D124 contributes to the substrate binding site. S128 is a binding site for NAD(+). D171 lines the substrate pocket. Zn(2+) is bound by residues D171 and H251. H255 lines the substrate pocket. A Zn(2+)-binding site is contributed by H267.

This sequence belongs to the glycerol-1-phosphate dehydrogenase family. The cofactor is Zn(2+).

The protein localises to the cytoplasm. It catalyses the reaction sn-glycerol 1-phosphate + NAD(+) = dihydroxyacetone phosphate + NADH + H(+). It carries out the reaction sn-glycerol 1-phosphate + NADP(+) = dihydroxyacetone phosphate + NADPH + H(+). Its pathway is membrane lipid metabolism; glycerophospholipid metabolism. Catalyzes the NAD(P)H-dependent reduction of dihydroxyacetonephosphate (DHAP or glycerone phosphate) to glycerol 1-phosphate (G1P). The G1P thus generated is used as the glycerophosphate backbone of phospholipids in the cellular membranes of Archaea. In Picrophilus torridus (strain ATCC 700027 / DSM 9790 / JCM 10055 / NBRC 100828 / KAW 2/3), this protein is Glycerol-1-phosphate dehydrogenase [NAD(P)+].